A 353-amino-acid chain; its full sequence is MMSTLSYTLGQLAAHVGAQVRGDADLPIQGLATLQEAGPAHLSFLANPQYRKYLPESRAGAVLLTAADADGFAGTALVVANPYLAYASLSHLFDRKPRAAAGIHPTAIVAADAEVDPSASVGAYAVIESGARIGAGVSIGAHCVIGARSVIGEGGWLAPRVTLYHDVNIGARVSIQSGAVIGGEGFGFANEKGVWQKIAQIGGVTIGDDVEIGANTTIDRGALSDTLIGNGVKLDNQIMIAHNVQIGDHTAMAACVGISGSAKIGRHCMLAGGVGLVGHIEICDNVFVTGMTMVTRSITEPGSYSSGTAMQPAAEWKKSAARIRQLDDMARRLQQLEKRLAAVTSSGDASSDA.

The Proton acceptor role is filled by His242.

It belongs to the transferase hexapeptide repeat family. LpxD subfamily. Homotrimer.

It catalyses the reaction a UDP-3-O-[(3R)-3-hydroxyacyl]-alpha-D-glucosamine + a (3R)-hydroxyacyl-[ACP] = a UDP-2-N,3-O-bis[(3R)-3-hydroxyacyl]-alpha-D-glucosamine + holo-[ACP] + H(+). The protein operates within bacterial outer membrane biogenesis; LPS lipid A biosynthesis. In terms of biological role, catalyzes the N-acylation of UDP-3-O-acylglucosamine using 3-hydroxyacyl-ACP as the acyl donor. Is involved in the biosynthesis of lipid A, a phosphorylated glycolipid that anchors the lipopolysaccharide to the outer membrane of the cell. The chain is UDP-3-O-acylglucosamine N-acyltransferase from Pseudomonas paraeruginosa (strain DSM 24068 / PA7) (Pseudomonas aeruginosa (strain PA7)).